The chain runs to 230 residues: Cell division ATP-binding protein FtsE (230 aa).

An ABC transporter domain is found at 4 to 229; the sequence is IEMRDVVKKY…DESKGEYGYD (226 aa). 37-44 contacts ATP; it reads GPSGAGKS.

Belongs to the ABC transporter superfamily. Homodimer. Interacts with FtsX; forms a membrane-associated complex. Interacts with pcsB.

It localises to the cell membrane. The enzyme catalyses ATP + H2O = ADP + phosphate + H(+). Functionally, part of the ABC transporter FtsEX involved in cellular division. Has ATPase activity. Essential for cell division and viability. This Streptococcus pneumoniae serotype 2 (strain D39 / NCTC 7466) protein is Cell division ATP-binding protein FtsE.